The following is a 612-amino-acid chain: Coagulation factor XII (612 aa).

The signal sequence occupies residues 1–19 (MRALLLLGALLVSLESTVS). A Fibronectin type-II domain is found at 42–90 (VTGEPCHFPFQYHRQLHHKCIHRGRPGPRPWCATTPNFEKDQRWAYCLE). Disulfide bonds link Cys47-Cys73, Cys61-Cys88, Cys98-Cys110, Cys104-Cys119, Cys121-Cys130, Cys135-Cys163, Cys161-Cys170, Cys178-Cys189, Cys183-Cys198, Cys200-Cys209, Cys217-Cys306, Cys240-Cys288, Cys268-Cys301, Cys355-Cys482, Cys393-Cys409, Cys401-Cys471, Cys432-Cys435, Cys498-Cys566, Cys529-Cys545, and Cys556-Cys587. The 38-residue stretch at 94 to 131 (VKDHCSKHNPCQKGGTCVNMPDGPRCICADHFTGKHCQ) folds into the EGF-like 1 domain. A glycan (O-linked (Fuc) threonine) is linked at Thr109. In terms of domain architecture, Fibronectin type-I spans 133 to 173 (EKCFEPQFFRFFHENEIWHRLEPAGVVKCQCKGPNAQCKPL). The region spanning 174–210 (ASQVCRTNPCLNGGSCLQAEGHRLCRCAPSFAGRLCD) is the EGF-like 2 domain. The Kringle domain occupies 217-306 (CYDDRDRGLS…SWNYCRLAPC (90 aa)). N-linked (GlcNAc...) asparagine glycosylation is found at Asn251 and Asn282. One can recognise a Peptidase S1 domain in the interval 369–611 (VVGGLVALPG…YLAWIREHTA (243 aa)). Residue His408 is the Charge relay system of the active site. N-linked (GlcNAc...) asparagine glycosylation occurs at Asn429. Asp457 (charge relay system) is an active-site residue. Ser560 serves as the catalytic Charge relay system.

The protein belongs to the peptidase S1 family. In terms of assembly, interacts with HRG; the interaction, which is enhanced in the presence of zinc ions and inhibited by heparin-binding, inhibits factor XII autoactivation and contact-initiated coagulation. O- and N-glycosylated.

It localises to the secreted. It carries out the reaction Selective cleavage of Arg-|-Ile bonds in factor VII to form factor VIIa and factor XI to form factor XIa.. With respect to regulation, activity is promoted in the presence of negatively charged surfaces. Functionally, factor XII is a serum glycoprotein that participates in the initiation of blood coagulation, fibrinolysis, and the generation of bradykinin and angiotensin. Prekallikrein is cleaved by factor XII to form kallikrein, which then cleaves factor XII first to alpha-factor XIIa and then to beta-factor XIIa. Alpha-factor XIIa activates factor XI to factor XIa. This Bos taurus (Bovine) protein is Coagulation factor XII (F12).